Here is a 329-residue protein sequence, read N- to C-terminus: GTP 3',8-cyclase (329 aa).

A Radical SAM core domain is found at 8–234 (AFARKFYYLR…QQRARSDGPA (227 aa)). Arg-17 is a binding site for GTP. [4Fe-4S] cluster contacts are provided by Cys-24 and Cys-28. S-adenosyl-L-methionine is bound at residue Tyr-30. Residue Cys-31 coordinates [4Fe-4S] cluster. Position 68 (Arg-68) interacts with GTP. An S-adenosyl-L-methionine-binding site is contributed by Gly-72. Thr-99 provides a ligand contact to GTP. Ser-123 is a binding site for S-adenosyl-L-methionine. A GTP-binding site is contributed by Lys-160. Residue Met-194 coordinates S-adenosyl-L-methionine. [4Fe-4S] cluster is bound by residues Cys-257 and Cys-260. 262–264 (RLR) is a GTP binding site. Cys-274 is a binding site for [4Fe-4S] cluster.

Belongs to the radical SAM superfamily. MoaA family. As to quaternary structure, monomer and homodimer. Requires [4Fe-4S] cluster as cofactor.

The catalysed reaction is GTP + AH2 + S-adenosyl-L-methionine = (8S)-3',8-cyclo-7,8-dihydroguanosine 5'-triphosphate + 5'-deoxyadenosine + L-methionine + A + H(+). It functions in the pathway cofactor biosynthesis; molybdopterin biosynthesis. Functionally, catalyzes the cyclization of GTP to (8S)-3',8-cyclo-7,8-dihydroguanosine 5'-triphosphate. In Pectobacterium atrosepticum (strain SCRI 1043 / ATCC BAA-672) (Erwinia carotovora subsp. atroseptica), this protein is GTP 3',8-cyclase.